The primary structure comprises 325 residues: Melanocortin receptor 5 (325 aa).

Topologically, residues Met-1–Gly-37 are extracellular. N-linked (GlcNAc...) asparagine glycans are attached at residues Asn-2, Asn-15, and Asn-28. Residues Ile-38–Ile-61 traverse the membrane as a helical segment. Residues Val-62–Phe-73 lie on the Cytoplasmic side of the membrane. The chain crosses the membrane as a helical span at residues Phe-74–Tyr-97. Residues Leu-98 to Ile-114 lie on the Extracellular side of the membrane. A helical membrane pass occupies residues Asp-115–Val-138. The Cytoplasmic segment spans residues Asp-139 to Thr-155. A helical transmembrane segment spans residues Ala-156 to Ile-179. Residues Tyr-180–Val-186 lie on the Extracellular side of the membrane. The helical transmembrane segment at Ile-187–Leu-211 threads the bilayer. Topologically, residues Ala-212–Thr-239 are cytoplasmic. The chain crosses the membrane as a helical span at residues Leu-240 to Pro-265. The Extracellular segment spans residues Gln-266–Phe-273. The helical transmembrane segment at Met-274–Leu-297 threads the bilayer. At Arg-298–Tyr-325 the chain is on the cytoplasmic side. 2 S-palmitoyl cysteine lipidation sites follow: Cys-311 and Cys-312.

Belongs to the G-protein coupled receptor 1 family. As to expression, very low expression levels is detected in brain, while high levels are found in adrenals, stomach, lung and spleen.

It localises to the cell membrane. Its function is as follows. Receptor for MSH (alpha, beta and gamma) and ACTH. The activity of this receptor is mediated by G proteins which activate adenylate cyclase. This receptor is a possible mediator of the immunomodulation properties of melanocortins. In Rattus norvegicus (Rat), this protein is Melanocortin receptor 5 (Mc5r).